The following is a 396-amino-acid chain: 1-deoxy-D-xylulose 5-phosphate reductoisomerase (396 aa).

NADPH-binding residues include T15, G16, S17, I18, G41, and N129. Residue K130 coordinates 1-deoxy-D-xylulose 5-phosphate. E131 is a binding site for NADPH. D155 is a binding site for Mn(2+). The 1-deoxy-D-xylulose 5-phosphate site is built by S156, E157, S182, and H205. E157 is a binding site for Mn(2+). G211 is an NADPH binding site. Residues S218, N223, K224, and E227 each coordinate 1-deoxy-D-xylulose 5-phosphate. E227 serves as a coordination point for Mn(2+).

The protein belongs to the DXR family. Mg(2+) serves as cofactor. The cofactor is Mn(2+).

The catalysed reaction is 2-C-methyl-D-erythritol 4-phosphate + NADP(+) = 1-deoxy-D-xylulose 5-phosphate + NADPH + H(+). The protein operates within isoprenoid biosynthesis; isopentenyl diphosphate biosynthesis via DXP pathway; isopentenyl diphosphate from 1-deoxy-D-xylulose 5-phosphate: step 1/6. In terms of biological role, catalyzes the NADPH-dependent rearrangement and reduction of 1-deoxy-D-xylulose-5-phosphate (DXP) to 2-C-methyl-D-erythritol 4-phosphate (MEP). The chain is 1-deoxy-D-xylulose 5-phosphate reductoisomerase from Xanthomonas axonopodis pv. citri (strain 306).